A 355-amino-acid chain; its full sequence is Zinc finger protein CONSTANS-LIKE 5 (355 aa).

Residues Cys22, Cys25, Cys45, His50, Cys61, Cys64, Cys84, and His89 each contribute to the Zn(2+) site. Residues 22-60 (CDACKSVTAAVFCRVDSAFLCIACDTRIHSFTRHERVWV) form a B box-type 1; atypical zinc finger. The B box-type 2; atypical zinc-finger motif lies at 61 to 103 (CEVCEQAPAAVTCKADAAALCVSCDADIHSANPLASRHERVPV). The CCT domain occupies 285-327 (REARVLRYREKRKNRKFEKTIRYASRKAYAESRPRIKGRFAKR).

Belongs to the CONSTANS family.

Its subcellular location is the nucleus. In Arabidopsis thaliana (Mouse-ear cress), this protein is Zinc finger protein CONSTANS-LIKE 5 (COL5).